The sequence spans 266 residues: Diphthine synthase (266 aa).

S-adenosyl-L-methionine-binding positions include leucine 9, aspartate 85, isoleucine 88, 113–114 (TA), leucine 168, alanine 210, and histidine 235.

The protein belongs to the diphthine synthase family. Homodimer.

It carries out the reaction 2-[(3S)-amino-3-carboxypropyl]-L-histidyl-[translation elongation factor 2] + 3 S-adenosyl-L-methionine = diphthine-[translation elongation factor 2] + 3 S-adenosyl-L-homocysteine + 3 H(+). It functions in the pathway protein modification; peptidyl-diphthamide biosynthesis. Functionally, S-adenosyl-L-methionine-dependent methyltransferase that catalyzes the trimethylation of the amino group of the modified target histidine residue in translation elongation factor 2 (EF-2), to form an intermediate called diphthine. The three successive methylation reactions represent the second step of diphthamide biosynthesis. This chain is Diphthine synthase, found in Natronomonas pharaonis (strain ATCC 35678 / DSM 2160 / CIP 103997 / JCM 8858 / NBRC 14720 / NCIMB 2260 / Gabara) (Halobacterium pharaonis).